Consider the following 453-residue polypeptide: tRNA modification GTPase MnmE (453 aa).

Arginine 22, glutamate 79, and lysine 119 together coordinate (6S)-5-formyl-5,6,7,8-tetrahydrofolate. The 162-residue stretch at 215–376 (GMKVVIAGRP…LREHLKACMG (162 aa)) folds into the TrmE-type G domain. Asparagine 225 lines the K(+) pocket. GTP contacts are provided by residues 225–230 (NAGKSS), 244–250 (TEIAGTT), 269–272 (DTAG), and 334–337 (NKAD). Serine 229 contacts Mg(2+). 3 residues coordinate K(+): threonine 244, isoleucine 246, and threonine 249. Mg(2+) is bound at residue threonine 250. Lysine 453 contributes to the (6S)-5-formyl-5,6,7,8-tetrahydrofolate binding site.

It belongs to the TRAFAC class TrmE-Era-EngA-EngB-Septin-like GTPase superfamily. TrmE GTPase family. In terms of assembly, homodimer. Heterotetramer of two MnmE and two MnmG subunits. K(+) serves as cofactor.

The protein localises to the cytoplasm. Its function is as follows. Exhibits a very high intrinsic GTPase hydrolysis rate. Involved in the addition of a carboxymethylaminomethyl (cmnm) group at the wobble position (U34) of certain tRNAs, forming tRNA-cmnm(5)s(2)U34. The sequence is that of tRNA modification GTPase MnmE from Aeromonas salmonicida (strain A449).